Reading from the N-terminus, the 530-residue chain is ATP synthase subunit alpha 3 (530 aa).

174–181 (GDRATGKT) lines the ATP pocket. Positions 507-522 (TASATAPPDPPAASAA) are enriched in low complexity. A disordered region spans residues 507–530 (TASATAPPDPPAASAAELPQPDSP).

It belongs to the ATPase alpha/beta chains family. F-type ATPases have 2 components, CF(1) - the catalytic core - and CF(0) - the membrane proton channel. CF(1) has five subunits: alpha(3), beta(3), gamma(1), delta(1), epsilon(1). CF(0) has three main subunits: a(1), b(2) and c(9-12). The alpha and beta chains form an alternating ring which encloses part of the gamma chain. CF(1) is attached to CF(0) by a central stalk formed by the gamma and epsilon chains, while a peripheral stalk is formed by the delta and b chains.

It is found in the cell inner membrane. It catalyses the reaction ATP + H2O + 4 H(+)(in) = ADP + phosphate + 5 H(+)(out). Produces ATP from ADP in the presence of a proton gradient across the membrane. The alpha chain is a regulatory subunit. This is ATP synthase subunit alpha 3 from Paraburkholderia xenovorans (strain LB400).